The sequence spans 188 residues: Protein salivary glands marred (188 aa).

Belongs to the TNFAIP8 family. In terms of assembly, interacts with the Ste20-like MAP kinase msn.

It localises to the cytoplasm. The protein localises to the cytoskeleton. Important for modulating JNK signaling, cytoskeletal remodeling and autophagy in larval salivary glands. During salivary gland development, involved in the positive regulation of the JNK signaling pathway, acting downstream of the TNF ligand egr and upstream of bsk. In Drosophila melanogaster (Fruit fly), this protein is Protein salivary glands marred.